The sequence spans 1183 residues: DNA-directed RNA polymerase subunit beta' (1183 aa).

Cysteine 60, cysteine 62, cysteine 75, and cysteine 78 together coordinate Zn(2+). Residues aspartate 449, aspartate 451, and aspartate 453 each coordinate Mg(2+). The Zn(2+) site is built by cysteine 794, cysteine 867, cysteine 874, and cysteine 877.

It belongs to the RNA polymerase beta' chain family. The RNAP catalytic core consists of 2 alpha, 1 beta, 1 beta' and 1 omega subunit. When a sigma factor is associated with the core the holoenzyme is formed, which can initiate transcription. Requires Mg(2+) as cofactor. Zn(2+) serves as cofactor.

The catalysed reaction is RNA(n) + a ribonucleoside 5'-triphosphate = RNA(n+1) + diphosphate. In terms of biological role, DNA-dependent RNA polymerase catalyzes the transcription of DNA into RNA using the four ribonucleoside triphosphates as substrates. The chain is DNA-directed RNA polymerase subunit beta' from Caldanaerobacter subterraneus subsp. tengcongensis (strain DSM 15242 / JCM 11007 / NBRC 100824 / MB4) (Thermoanaerobacter tengcongensis).